The primary structure comprises 132 residues: ATP synthase epsilon chain (132 aa).

This sequence belongs to the ATPase epsilon chain family. As to quaternary structure, F-type ATPases have 2 components, CF(1) - the catalytic core - and CF(0) - the membrane proton channel. CF(1) has five subunits: alpha(3), beta(3), gamma(1), delta(1), epsilon(1). CF(0) has three main subunits: a, b and c.

The protein resides in the cell membrane. In terms of biological role, produces ATP from ADP in the presence of a proton gradient across the membrane. This is ATP synthase epsilon chain from Bacillus velezensis (strain DSM 23117 / BGSC 10A6 / LMG 26770 / FZB42) (Bacillus amyloliquefaciens subsp. plantarum).